The chain runs to 510 residues: Glycerol kinase (510 aa).

Position 14 (Thr-14) interacts with ADP. Residues Thr-14 and Thr-15 each coordinate ATP. Thr-14 serves as a coordination point for sn-glycerol 3-phosphate. Arg-18 is an ADP binding site. Sn-glycerol 3-phosphate is bound by residues Arg-84, Glu-85, Tyr-136, and Asp-256. Glycerol is bound by residues Arg-84, Glu-85, Tyr-136, Asp-256, and Gln-257. Positions 278, 322, 422, and 426 each coordinate ADP. Residues Thr-278, Gly-322, and Gly-422 each contribute to the ATP site.

The protein belongs to the FGGY kinase family.

The enzyme catalyses glycerol + ATP = sn-glycerol 3-phosphate + ADP + H(+). Its pathway is polyol metabolism; glycerol degradation via glycerol kinase pathway; sn-glycerol 3-phosphate from glycerol: step 1/1. Key enzyme in the regulation of glycerol uptake and metabolism. Catalyzes the phosphorylation of glycerol to yield sn-glycerol 3-phosphate. It also catalyzes the phosphorylation of dihydroxyacetone (DHA). Involved, together with the DHA kinase DhaKLM, in the metabolism of DHA. The protein is Glycerol kinase of Haloferax volcanii (strain ATCC 29605 / DSM 3757 / JCM 8879 / NBRC 14742 / NCIMB 2012 / VKM B-1768 / DS2) (Halobacterium volcanii).